The following is a 286-amino-acid chain: ATP synthase gamma chain (286 aa).

This sequence belongs to the ATPase gamma chain family. In terms of assembly, F-type ATPases have 2 components, CF(1) - the catalytic core - and CF(0) - the membrane proton channel. CF(1) has five subunits: alpha(3), beta(3), gamma(1), delta(1), epsilon(1). CF(0) has three main subunits: a, b and c.

The protein localises to the cell inner membrane. In terms of biological role, produces ATP from ADP in the presence of a proton gradient across the membrane. The gamma chain is believed to be important in regulating ATPase activity and the flow of protons through the CF(0) complex. This is ATP synthase gamma chain from Pseudomonas putida (strain GB-1).